The following is a 753-amino-acid chain: MTILNHTLGFPRVGLRRELKKAQESYWAGNSTREELLAVGRELRARHWEQQKQAGIDLLPVGDFAWYDHVLTTSLLLGNVPARHQNNDGSVDIDTLFRIGRGRAPTGEPAAAAEMTKWFNTNYHYMVPEFVKGQQFKLTWTQLLEEVDEALALGHKVKPVLLGPVTYLWLGKVKGEQFDRLSLLNDILPVYQQVLAELAKRGIEWVQIDEPALVLELPQAWLDAYKPAYDALQGQVKLLLTTYFEGVTPNLDTITALPVQGLHVDLVHGKDDVAELHKRLPSDWLLSAGLINGRNVWRADLTEKYAQIKDIVGKRDLWVASSCSLLHSPIDLSVETRLDAEVKSWFAFALQKCHELALLRDALNSGDTAALAAWSAPIQARRHSTRVHNPAVEKRLAAITAQDSQRANVYEVRAEAQRARFKLPAWPTTTIGSFPQTTEIRTLRLDFKKGNLDANNYRTGIAEHIKQAIVEQERLGLDVLVHGEAERNDMVEYFGEHLDGFVFTQNGWVQSYGSRCVKPPIVIGDVSRPAPITVEWAKYAQSLTDKPVKGMLTGPVTILCWSFPREDVSRETIAKQIALALRDEVADLEAAGIGIIQIDEPALREGLPLRRSDWDAYLQWGVEAFRINAAVAKDDTQIHTHMCYCEFNDIMDSIAALDADVITIETSRSDMELLESFEEFDYPNEIGPGVYDIHSPNVPSVEWIEALLKKAAKRIPAERLWVNPDCGLKTRGWPETRAALANMVQAAQNLRRG.

5-methyltetrahydropteroyltri-L-glutamate contacts are provided by residues R17–K20 and K117. L-homocysteine contacts are provided by residues I431–S433 and E484. L-methionine-binding positions include I431–S433 and E484. 5-methyltetrahydropteroyltri-L-glutamate is bound by residues R515–C516 and W561. An L-homocysteine-binding site is contributed by D599. D599 provides a ligand contact to L-methionine. A 5-methyltetrahydropteroyltri-L-glutamate-binding site is contributed by E605. 3 residues coordinate Zn(2+): H641, C643, and E665. H694 (proton donor) is an active-site residue. A Zn(2+)-binding site is contributed by C726.

It belongs to the vitamin-B12 independent methionine synthase family. Zn(2+) serves as cofactor.

The enzyme catalyses 5-methyltetrahydropteroyltri-L-glutamate + L-homocysteine = tetrahydropteroyltri-L-glutamate + L-methionine. It functions in the pathway amino-acid biosynthesis; L-methionine biosynthesis via de novo pathway; L-methionine from L-homocysteine (MetE route): step 1/1. Its function is as follows. Catalyzes the transfer of a methyl group from 5-methyltetrahydrofolate to homocysteine resulting in methionine formation. This is 5-methyltetrahydropteroyltriglutamate--homocysteine methyltransferase from Escherichia coli (strain SMS-3-5 / SECEC).